The following is a 189-amino-acid chain: GTP cyclohydrolase 1 (189 aa).

Residues Cys79, His82, and Cys150 each contribute to the Zn(2+) site.

This sequence belongs to the GTP cyclohydrolase I family. In terms of assembly, homomer.

The enzyme catalyses GTP + H2O = 7,8-dihydroneopterin 3'-triphosphate + formate + H(+). Its pathway is cofactor biosynthesis; 7,8-dihydroneopterin triphosphate biosynthesis; 7,8-dihydroneopterin triphosphate from GTP: step 1/1. This is GTP cyclohydrolase 1 from Rickettsia africae (strain ESF-5).